A 230-amino-acid polypeptide reads, in one-letter code: UPF0173 metal-dependent hydrolase MK1542 (230 aa).

It belongs to the UPF0173 family.

The chain is UPF0173 metal-dependent hydrolase MK1542 from Methanopyrus kandleri (strain AV19 / DSM 6324 / JCM 9639 / NBRC 100938).